A 95-amino-acid chain; its full sequence is Protein NCBP2AS2 homolog (95 aa).

The chain is Protein NCBP2AS2 homolog from Ixodes scapularis (Black-legged tick).